Reading from the N-terminus, the 163-residue chain is Small ribosomal subunit protein uS5 (163 aa).

The S5 DRBM domain maps to Leu8–Val71.

This sequence belongs to the universal ribosomal protein uS5 family. Part of the 30S ribosomal subunit. Contacts proteins S4 and S8.

Its function is as follows. With S4 and S12 plays an important role in translational accuracy. Located at the back of the 30S subunit body where it stabilizes the conformation of the head with respect to the body. This chain is Small ribosomal subunit protein uS5, found in Maridesulfovibrio salexigens (strain ATCC 14822 / DSM 2638 / NCIMB 8403 / VKM B-1763) (Desulfovibrio salexigens).